Here is a 363-residue protein sequence, read N- to C-terminus: MEIQNTKPTQTLYTDISTKQTQSSSETQKSQNYQQIAAHIPLNVGKNPVLTTTLNDDQLLKLSEQVQHDSEIIARLTDKKMKDLSEMSHTLTPENTLDISSLSSNAVSLIISVAVLLSALRTAETKLGSQLSLIAFDATKSAAENIVRQGLAALSSSITGAVTQVGITGIGAKKTHSGISDQKGALRKNLATAQSLEKELAGSKLGLNKQIDTNITSPQTNSSTKFLGKNKLAPDNISLSTEHKTSLSSPDISLQDKIDTQRRTYELNTLSAQQKQNIGRATMETSAVAGNISTSGGRYASALEEEEQLISQASSKQAEEASQVSKEASQATNQLIQKLLNIIDSINQSKNSAASQIAGNIRA.

Polar residues predominate over residues 1–16; it reads MEIQNTKPTQTLYTDI. The interval 1–30 is disordered; the sequence is MEIQNTKPTQTLYTDISTKQTQSSSETQKS. Positions 17–30 are enriched in low complexity; that stretch reads STKQTQSSSETQKS. The segment at 33 to 73 is ipgC chaperone binding domain; that stretch reads YQQIAAHIPLNVGKNPVLTTTLNDDQLLKLSEQVQHDSEII. Residues 99 to 120 traverse the membrane as a helical segment; that stretch reads ISSLSSNAVSLIISVAVLLSAL.

It belongs to the SctB/SipC family. The core secretion machinery of the T3SS is composed of approximately 20 different proteins, including cytoplasmic components, a base, an export apparatus and a needle. This subunit is involved in the formation of a pore, called the translocon, in host membrane. Interacts with IpaB/SctE. Interacts with the molecular chaperone IpgC, which prevents premature association with IpaB/SctE within the cytoplasm of Shigella cells. Does not interact with CDC42 or RAC1 GTPases in vitro.

Its subcellular location is the secreted. The protein resides in the host membrane. Its activity is regulated as follows. Interaction with the membrane is affected by the pH. Its function is as follows. Component of the type III secretion system (T3SS), also called injectisome, which is used to inject bacterial effector proteins into eukaryotic host cells. IpaB/SctE and IpaC/SctB are inserted into the host membrane where they form a pore and allow the translocation of effector proteins into the cytosol of target cells. Induction and secretion of IpaC/SctB comprise the final step in triggering the induction of full type III secretion. In terms of biological role, required for efficient dissemination. Necessary for lysis of the two cellular membranes that surround bacteria in protrusions during cell-to-cell spread. Contribute to actin nucleation in vitro, which may be a necessary step in Shigella invasion. The sequence is that of Type 3 secretion system translocon protein SctB from Shigella flexneri.